We begin with the raw amino-acid sequence, 773 residues long: ATP-dependent RNA helicase MAK5 (773 aa).

Positions 73–82 (KDSNKEKVGD) are enriched in basic and acidic residues. Disordered stretches follow at residues 73 to 99 (KDSN…ESEL) and 114 to 144 (SAAS…VDED). The span at 83–99 (DQESVENESGSDSESEL) shows a compositional bias: acidic residues. Phosphothreonine is present on Thr-135. Position 138 is a phosphoserine (Ser-138). Positions 171-199 (EWTNLAPLSMTILQSLQNLNFLRPTEIQK) match the Q motif motif. The region spanning 202-399 (IPVIMQGVDV…SSSRQVKDRR (198 aa)) is the Helicase ATP-binding domain. An ATP-binding site is contributed by 215–222 (ASTGSGKT). Positions 333–336 (DEAD) match the DEAD box motif. In terms of domain architecture, Helicase C-terminal spans 452–615 (DLYCYYFLTM…STDLNSRSTN (164 aa)). Ser-678 is subject to Phosphoserine.

It belongs to the DEAD box helicase family. DDX24/MAK5 subfamily.

It is found in the nucleus. The protein localises to the nucleolus. The enzyme catalyses ATP + H2O = ADP + phosphate + H(+). ATP-binding RNA helicase involved in the biogenesis of 60S ribosomal subunits and is required for the normal formation of 25S and 5.8S rRNAs. Required for the maintenance of dsRNA killer plasmid. This chain is ATP-dependent RNA helicase MAK5 (MAK5), found in Saccharomyces cerevisiae (strain ATCC 204508 / S288c) (Baker's yeast).